Consider the following 275-residue polypeptide: Large ribosomal subunit protein uL2 (275 aa).

Residues R221 to R275 are disordered. Positions D229–E241 are enriched in basic and acidic residues.

Belongs to the universal ribosomal protein uL2 family. As to quaternary structure, part of the 50S ribosomal subunit. Forms a bridge to the 30S subunit in the 70S ribosome.

Its function is as follows. One of the primary rRNA binding proteins. Required for association of the 30S and 50S subunits to form the 70S ribosome, for tRNA binding and peptide bond formation. It has been suggested to have peptidyltransferase activity; this is somewhat controversial. Makes several contacts with the 16S rRNA in the 70S ribosome. In Dechloromonas aromatica (strain RCB), this protein is Large ribosomal subunit protein uL2.